A 510-amino-acid chain; its full sequence is ATP synthase subunit alpha (510 aa).

170–177 (GDRQTGKT) provides a ligand contact to ATP.

The protein belongs to the ATPase alpha/beta chains family. In terms of assembly, F-type ATPases have 2 components, CF(1) - the catalytic core - and CF(0) - the membrane proton channel. CF(1) has five subunits: alpha(3), beta(3), gamma(1), delta(1), epsilon(1). CF(0) has three main subunits: a(1), b(2) and c(9-12). The alpha and beta chains form an alternating ring which encloses part of the gamma chain. CF(1) is attached to CF(0) by a central stalk formed by the gamma and epsilon chains, while a peripheral stalk is formed by the delta and b chains.

The protein localises to the cell inner membrane. It catalyses the reaction ATP + H2O + 4 H(+)(in) = ADP + phosphate + 5 H(+)(out). Functionally, produces ATP from ADP in the presence of a proton gradient across the membrane. The alpha chain is a regulatory subunit. This Dictyoglomus thermophilum (strain ATCC 35947 / DSM 3960 / H-6-12) protein is ATP synthase subunit alpha.